Consider the following 128-residue polypeptide: Type-4 ice-structuring protein LS-12 (128 aa).

An N-terminal signal peptide occupies residues 1–20; the sequence is MKFSLVATIVLLALAQGSFA. Q21 is subject to Pyrrolidone carboxylic acid.

This sequence belongs to the apolipoprotein A1/A4/E family.

The protein resides in the secreted. Its function is as follows. Antifreeze proteins lower the blood freezing point. The protein is Type-4 ice-structuring protein LS-12 of Myoxocephalus octodecemspinosus (Longhorn sculpin).